The following is a 503-amino-acid chain: Glucosaminyl-phosphatidylinositol-acyltransferase PIGW (503 aa).

Residues 1–21 (MSQKQMKEAFVSNQNGTSVLE) lie on the Lumenal side of the membrane. N15 carries N-linked (GlcNAc...) asparagine glycosylation. A helical membrane pass occupies residues 22–42 (ITEGLCLPALCILCRGLLIIL). Topologically, residues 43–56 (SQQLCSSLHNSRTR) are cytoplasmic. A helical transmembrane segment spans residues 57 to 75 (FLVDFAFLIVPLVTTLTIF). The Lumenal portion of the chain corresponds to 76 to 78 (SSF). A helical transmembrane segment spans residues 79–98 (VLLEYLVAIILGAGLLYEIY). Over 99–131 (CRRTCYARMPFQKICEKFLKVSLESEHIPAISC) the chain is Cytoplasmic. A helical transmembrane segment spans residues 132 to 152 (FRVVNSAFTAVAILAVDFPLF). The Lumenal portion of the chain corresponds to 153–160 (PRRYAKTE). The chain crosses the membrane as a helical span at residues 161-181 (LYGTGAMDYGVGGFIFGSAMV). Topologically, residues 182–201 (SPEVRRKYTKGSRFCYLTKS) are cytoplasmic. Residues 202 to 222 (LYSLWPLVFLGVGRLVAIKSV) traverse the membrane as a helical segment. Topologically, residues 223–236 (DYQEHLTEYGVHWN) are lumenal. A helical membrane pass occupies residues 237–257 (FFFTLIAVKLITSLLLLICPL). Residues 258-259 (NR) are Cytoplasmic-facing. Residues 260-280 (SWVVAISIAALYQLALDFTPL) form a helical membrane-spanning segment. Topologically, residues 281-304 (KSLILYGTDGSGTRVGLLNANREG) are lumenal. The chain crosses the membrane as a helical span at residues 305–325 (IISVLGYVAVHMAGVQTGLYV). At 326–337 (LKKRSHIKDWIK) the chain is on the cytoplasmic side. Residues 338 to 358 (VACCILLTAIGLFISLYIVQV) traverse the membrane as a helical segment. Residues 359 to 369 (NVEVASRRMAN) are Lumenal-facing. The chain crosses the membrane as a helical span at residues 370 to 390 (LAFCIWIVASCLILLSSLLLG). Topologically, residues 391-447 (DIILSFAKFVIKEAAVPCSWKLIQSPTANKKHLESIVFDAKRKEPTLCLITAMNRNQ) are cytoplasmic. A Phosphoserine modification is found at S415. The helical transmembrane segment at 448–468 (LLFFLLSNVTTGLVNLSIDTL) threads the bilayer. Topologically, residues 469-472 (HSST) are lumenal. A helical transmembrane segment spans residues 473–493 (PWALCLLNLYMFTNCLIIYVL). Residues 494–503 (HLQDKTIKFW) lie on the Cytoplasmic side of the membrane.

This sequence belongs to the PIGW family.

It is found in the endoplasmic reticulum membrane. It participates in glycolipid biosynthesis; glycosylphosphatidylinositol-anchor biosynthesis. Functionally, acyltransferase that catalyzes the acyl transfer from an acyl-CoA at the 2-OH position of the inositol ring of glucosaminyl phosphatidylinositol (GlcN-PI) to generate glucosaminyl acyl phosphatidylinositol (GlcN-(acyl)PI) and participates in the fourth step of GPI-anchor biosynthesis. Required for the transport of GPI-anchored proteins to the plasma membrane. Acetylation during GPI-anchor biosynthesis is not essential for the subsequent mannosylation and is usually removed soon after the attachment of GPIs to proteins. This chain is Glucosaminyl-phosphatidylinositol-acyltransferase PIGW, found in Bos taurus (Bovine).